A 378-amino-acid polypeptide reads, in one-letter code: Integrator complex assembly factor WDR73 (378 aa).

WD repeat units follow at residues 73 to 113 (DFKV…VWQV), 121 to 163 (KAVS…VVDL), 167 to 205 (KTTY…LVDT), 214 to 255 (NRSP…LLDP), 266 to 305 (QCPV…VYDA), and 322 to 371 (EPLF…VWDW).

The protein belongs to the WD repeat WDR73 family. Interacts with INTS9 and INTS11; the interaction is direct. Part of the multiprotein complex composed of BRAT1, WDR73, as well as integrator complex subunits INTS9 and INTS11. In terms of tissue distribution, expressed in kidney and brain. In the kidney, expressed in glomeruli, most probably in podocytes, and in tubules (at protein level). In the brain, expressed in the cerebellum, with high levels in Purkinje cells and their projecting axons, in the deep cerebellar nuclei and in pyramidal neurons of the cerebral cortex (at protein level). In the white matter, mainly present in astrocytes, but not in oligodendrocytes (at protein level). Also highly expressed in endothelial cells of cerebral capillaries (at protein level).

The protein resides in the cytoplasm. Its subcellular location is the cytoskeleton. The protein localises to the spindle. It is found in the spindle pole. It localises to the cleavage furrow. In terms of biological role, component of a multiprotein complex required for the assembly of the RNA endonuclease module of the integrator complex. Associates with INTS9 and INTS11 in the cytoplasm, stabilizing the INTS9-INTS11 heterodimer and blocking the active site of INTS11. BRAT1 then joins the complex and plugs the active site of INTS11, leading to WDR73 release and nuclear import of INTS9 and INTS11. This is Integrator complex assembly factor WDR73 from Homo sapiens (Human).